We begin with the raw amino-acid sequence, 296 residues long: Protoheme IX farnesyltransferase (296 aa).

The Cytoplasmic portion of the chain corresponds to Met1–Val9. A helical transmembrane segment spans residues Thr10–Leu28. The Periplasmic segment spans residues Ala29 to Pro37. Residues Leu38–Phe56 traverse the membrane as a helical segment. Over Asn57–Lys78 the chain is Cytoplasmic. A helical membrane pass occupies residues Gly79–Gly97. Residues Phe98–Pro107 are Periplasmic-facing. Residues Leu108–Leu126 traverse the membrane as a helical segment. Residues Tyr127–Pro197 lie on the Cytoplasmic side of the membrane. The chain crosses the membrane as a helical span at residues Val198–Phe216. Topologically, residues Ala217–Tyr228 are periplasmic. A helical membrane pass occupies residues Ala229 to Met247. At Ala248 to Ser268 the chain is on the cytoplasmic side. A helical membrane pass occupies residues Ile269 to Asp287. Residues Ser288–Trp296 lie on the Periplasmic side of the membrane.

Belongs to the UbiA prenyltransferase family. Protoheme IX farnesyltransferase subfamily.

The protein localises to the cell inner membrane. It catalyses the reaction heme b + (2E,6E)-farnesyl diphosphate + H2O = Fe(II)-heme o + diphosphate. It functions in the pathway porphyrin-containing compound metabolism; heme O biosynthesis; heme O from protoheme: step 1/1. Functionally, converts heme B (protoheme IX) to heme O by substitution of the vinyl group on carbon 2 of heme B porphyrin ring with a hydroxyethyl farnesyl side group. The sequence is that of Protoheme IX farnesyltransferase from Shigella sonnei (strain Ss046).